A 197-amino-acid polypeptide reads, in one-letter code: uncharacterized protein (197 aa).

This is an uncharacterized protein from Caenorhabditis elegans.